A 284-amino-acid chain; its full sequence is Nucleotide-binding protein Sbal223_0704 (284 aa).

8 to 15 contacts ATP; the sequence is GRSGSGKS. 56–59 serves as a coordination point for GTP; the sequence is DVRN.

This sequence belongs to the RapZ-like family.

In terms of biological role, displays ATPase and GTPase activities. The chain is Nucleotide-binding protein Sbal223_0704 from Shewanella baltica (strain OS223).